The sequence spans 291 residues: N-acetylmannosamine kinase (291 aa).

ATP contacts are provided by residues Ala5–Lys12 and Gly132–Ser139. Zn(2+) contacts are provided by His156, Cys166, Cys168, and Cys173.

It belongs to the ROK (NagC/XylR) family. NanK subfamily. As to quaternary structure, homodimer.

It catalyses the reaction an N-acyl-D-mannosamine + ATP = an N-acyl-D-mannosamine 6-phosphate + ADP + H(+). The protein operates within amino-sugar metabolism; N-acetylneuraminate degradation; D-fructose 6-phosphate from N-acetylneuraminate: step 2/5. Catalyzes the phosphorylation of N-acetylmannosamine (ManNAc) to ManNAc-6-P. The sequence is that of N-acetylmannosamine kinase from Shigella flexneri serotype 5b (strain 8401).